A 95-amino-acid chain; its full sequence is Mitochondrial import inner membrane translocase subunit Tim13 (95 aa).

Residues 46-69 (CFKKCIGKPGSTLDNSEQKCIAMC) carry the Twin CX3C motif motif. Cystine bridges form between cysteine 46-cysteine 69 and cysteine 50-cysteine 65.

Belongs to the small Tim family. In terms of assembly, heterohexamer; composed of 3 copies of TIMM8 (TIMM8A or TIMM8B) and 3 copies of TIMM13, named soluble 70 kDa complex. Associates with the TIM22 complex, whose core is composed of TIMM22.

It localises to the mitochondrion inner membrane. In terms of biological role, mitochondrial intermembrane chaperone that participates in the import and insertion of some multi-pass transmembrane proteins into the mitochondrial inner membrane. Also required for the transfer of beta-barrel precursors from the TOM complex to the sorting and assembly machinery (SAM complex) of the outer membrane. Acts as a chaperone-like protein that protects the hydrophobic precursors from aggregation and guide them through the mitochondrial intermembrane space. The TIMM8-TIMM13 complex mediates the import of some proteins while the predominant TIMM9-TIMM10 70 kDa complex mediates the import of much more proteins. The protein is Mitochondrial import inner membrane translocase subunit Tim13 (timm13) of Danio rerio (Zebrafish).